The primary structure comprises 418 residues: UDP-N-acetylglucosamine 1-carboxyvinyltransferase (418 aa).

Residue 22–23 coordinates phosphoenolpyruvate; that stretch reads KN. A UDP-N-acetyl-alpha-D-glucosamine-binding site is contributed by R91. Residue C115 is the Proton donor of the active site. A 2-(S-cysteinyl)pyruvic acid O-phosphothioketal modification is found at C115. Positions 303 and 325 each coordinate UDP-N-acetyl-alpha-D-glucosamine.

Belongs to the EPSP synthase family. MurA subfamily.

The protein localises to the cytoplasm. The catalysed reaction is phosphoenolpyruvate + UDP-N-acetyl-alpha-D-glucosamine = UDP-N-acetyl-3-O-(1-carboxyvinyl)-alpha-D-glucosamine + phosphate. Its pathway is cell wall biogenesis; peptidoglycan biosynthesis. In terms of biological role, cell wall formation. Adds enolpyruvyl to UDP-N-acetylglucosamine. The chain is UDP-N-acetylglucosamine 1-carboxyvinyltransferase from Syntrophobacter fumaroxidans (strain DSM 10017 / MPOB).